A 960-amino-acid polypeptide reads, in one-letter code: ATPase 4, plasma membrane-type (960 aa).

At M1–F69 the chain is on the cytoplasmic side. Residues L70–I89 traverse the membrane as a helical segment. The Extracellular segment spans residues A90–W101. A helical membrane pass occupies residues Q102–E122. At N123–I251 the chain is on the cytoplasmic side. A helical membrane pass occupies residues G252–P272. Topologically, residues I273–G281 are extracellular. A helical transmembrane segment spans residues I282–T299. Topologically, residues V300–K651 are cytoplasmic. Residue D337 is the 4-aspartylphosphate intermediate of the active site. 2 residues coordinate Mg(2+): D596 and D600. A helical membrane pass occupies residues N652–L673. Over I674–D678 the chain is Extracellular. The chain crosses the membrane as a helical span at residues F679 to D701. Residues R702 to I717 are Cytoplasmic-facing. The chain crosses the membrane as a helical span at residues F718 to V738. Over S739–R763 the chain is Extracellular. Residues K764–T784 traverse the membrane as a helical segment. The Cytoplasmic segment spans residues R785–G796. A helical transmembrane segment spans residues I797 to A817. At N818–E825 the chain is on the extracellular side. Residues G826–L846 form a helical membrane-spanning segment. At D847–V960 the chain is on the cytoplasmic side. T893 bears the Phosphothreonine mark. Residue S942 is modified to Phosphoserine. Residues Y958 to V960 are interaction with 14-3-3 proteins. T959 carries the post-translational modification Phosphothreonine.

It belongs to the cation transport ATPase (P-type) (TC 3.A.3) family. Type IIIA subfamily. In terms of assembly, binds to 14-3-3 proteins. The binding is induced by phosphorylation of Thr-959. Binding to 14-3-3 proteins activates the H(+)-ATPase. Expressed in guard cells and roots.

It is found in the cell membrane. The enzyme catalyses ATP + H2O + H(+)(in) = ADP + phosphate + 2 H(+)(out). Its function is as follows. The plasma membrane H(+) ATPase of plants and fungi generates a proton gradient that drives the active transport of nutrients by H(+)-symport. The resulting external acidification and/or internal alkinization may mediate growth responses. The polypeptide is ATPase 4, plasma membrane-type (AHA4) (Arabidopsis thaliana (Mouse-ear cress)).